Consider the following 334-residue polypeptide: N,N'-diacetyllegionaminic acid synthase (334 aa).

One can recognise an AFP-like domain in the interval 282–334; that stretch reads SLVAKKDIKKGEIFSEGNLTTKRPANGISAMRYEEFLGKIATKNYKEDELIRE.

The catalysed reaction is 2,4-diacetamido-2,4,6-trideoxy-alpha-D-mannopyranose + phosphoenolpyruvate + H2O = N,N-diacetyllegionaminate + phosphate. Functionally, involved in biosynthesis of legionaminic acid (5,7-diamino-3,5,7,9-tetradeoxy-D-glycero-D-galacto-non-2-ulosonic acid)(Leg), a sialic acid-like derivative that is incorporated into flagellin via O-linkage to Ser/Thr. Catalyzes the condensation of 2,4-diacetamido-2,4,6-trideoxymannose with phosphoenolpyruvate (PEP) to give N,N'-diacetyllegionaminic acid. This chain is N,N'-diacetyllegionaminic acid synthase (legI), found in Campylobacter jejuni subsp. jejuni serotype O:2 (strain ATCC 700819 / NCTC 11168).